Consider the following 370-residue polypeptide: Histidinol-phosphate aminotransferase (370 aa).

K223 carries the post-translational modification N6-(pyridoxal phosphate)lysine.

The protein belongs to the class-II pyridoxal-phosphate-dependent aminotransferase family. Histidinol-phosphate aminotransferase subfamily. In terms of assembly, homodimer. Requires pyridoxal 5'-phosphate as cofactor.

The catalysed reaction is L-histidinol phosphate + 2-oxoglutarate = 3-(imidazol-4-yl)-2-oxopropyl phosphate + L-glutamate. It functions in the pathway amino-acid biosynthesis; L-histidine biosynthesis; L-histidine from 5-phospho-alpha-D-ribose 1-diphosphate: step 7/9. This chain is Histidinol-phosphate aminotransferase, found in Methylobacterium sp. (strain 4-46).